The primary structure comprises 307 residues: Glycerol-3-phosphate dehydrogenase [NAD(P)+] (307 aa).

W14, R34, R35, and K82 together coordinate NADPH. K82 and G110 together coordinate sn-glycerol 3-phosphate. S114 lines the NADPH pocket. Residues K165, D218, S228, R229, and N230 each contribute to the sn-glycerol 3-phosphate site. K165 functions as the Proton acceptor in the catalytic mechanism. NADPH is bound at residue R229. Residue E255 coordinates NADPH.

The protein belongs to the NAD-dependent glycerol-3-phosphate dehydrogenase family.

It localises to the cytoplasm. The catalysed reaction is sn-glycerol 3-phosphate + NAD(+) = dihydroxyacetone phosphate + NADH + H(+). The enzyme catalyses sn-glycerol 3-phosphate + NADP(+) = dihydroxyacetone phosphate + NADPH + H(+). The protein operates within membrane lipid metabolism; glycerophospholipid metabolism. In terms of biological role, catalyzes the reduction of the glycolytic intermediate dihydroxyacetone phosphate (DHAP) to sn-glycerol 3-phosphate (G3P), the key precursor for phospholipid synthesis. The sequence is that of Glycerol-3-phosphate dehydrogenase [NAD(P)+] from Nostoc sp. (strain PCC 7120 / SAG 25.82 / UTEX 2576).